A 285-amino-acid polypeptide reads, in one-letter code: Transmembrane protein DDB_G0269096 (285 aa).

2 disordered regions span residues 1–25 (MEDR…MSQS) and 59–87 (SFEN…NNKN). Low complexity-rich tracts occupy residues 12–25 (SDIS…MSQS) and 65–85 (NNNN…NNNN). 5 consecutive transmembrane segments (helical) span residues 124–144 (LEEI…LALI), 152–172 (AQMQ…FGVP), 182–202 (LIMG…ALVY), 205–225 (ANFE…MQFT), and 250–270 (FYFI…TALV).

It is found in the membrane. The polypeptide is Transmembrane protein DDB_G0269096 (Dictyostelium discoideum (Social amoeba)).